We begin with the raw amino-acid sequence, 111 residues long: Cornifelin homolog (111 aa).

This sequence belongs to the cornifelin family.

This is Cornifelin homolog (cnfn) from Xenopus tropicalis (Western clawed frog).